The chain runs to 82 residues: Small ribosomal subunit protein uS17 (82 aa).

The protein belongs to the universal ribosomal protein uS17 family. Part of the 30S ribosomal subunit.

In terms of biological role, one of the primary rRNA binding proteins, it binds specifically to the 5'-end of 16S ribosomal RNA. The polypeptide is Small ribosomal subunit protein uS17 (Pelobacter propionicus (strain DSM 2379 / NBRC 103807 / OttBd1)).